We begin with the raw amino-acid sequence, 713 residues long: MLCVGRLGGLGARAAALPPRRAGRGSLEAGIRARRVSTSWSPVGAAFNVKPQGSRLDLFGERRGLFGVPELSAPEGFHIAQEKALRKTELLVDRACSTPPGPQTVLIFDELSDSLCRVADLADFVKIAHPEPAFREAAEEACRSIGTMVEKLNTNVDLYQSLQKLLADKKLVDSLDPETRRVAELFMFDFEISGIHLDKEKRKRAVDLNVKILDLSSTFLMGTNFPNKIEKHLLPEHIRRNFTSAGDHIIIDGLHAESPDDLVREAAYKIFLYPNAGQLKCLEELLSSRDLLAKLVGYSTFSHRALQGTIAKNPETVMQFLEKLSDKLSERTLKDFEMIRGMKMKLNPQNSEVMPWDPPYYSGVIRAERYNIEPSLYCPFFSLGACMEGLNILLNRLLGISLYAEQPAKGEVWSEDVRKLAVVHESEGLLGYIYCDFFQRADKPHQDCHFTIRGGRLKEDGDYQLPVVVLMLNLPRSSRSSPTLLTPSMMENLFHEMGHAMHSMLGRTRYQHVTGTRCPTDFAEVPSILMEYFANDYRVVNQFARHYQTGQPLPKNMVSRLCESKKVCAAADMQLQVFYATLDQIYHGKHPLRNSTTDILKETQEKFYGLPYVPNTAWQLRFSHLVGYGARYYSYLMSRAVASMVWKECFLQDPFNRAAGERYRREMLAHGGGREPMLMVEGMLQKCPSVDDFVSALVSDLDLDFETFLMDSE.

Residues 1-35 constitute a mitochondrion transit peptide; sequence MLCVGRLGGLGARAAALPPRRAGRGSLEAGIRARR. N6-acetyllysine is present on Lys126. His495 contacts Zn(2+). Glu496 is a catalytic residue. Positions 499 and 502 each coordinate Zn(2+).

Belongs to the peptidase M3 family. Monomer. Zn(2+) is required as a cofactor.

The protein resides in the mitochondrion matrix. The enzyme catalyses Release of an N-terminal octapeptide as second stage of processing of some proteins imported into the mitochondrion.. Its activity is regulated as follows. Activity is divalent cation-dependent. It is stimulated by manganese, magnesium or calcium ions and reversibly inhibited by zinc, cobalt and iron. Functionally, cleaves proteins, imported into the mitochondrion, to their mature size. The protein is Mitochondrial intermediate peptidase (MIPEP) of Homo sapiens (Human).